Reading from the N-terminus, the 243-residue chain is UPF0702 transmembrane protein YkjA (243 aa).

3 helical membrane passes run 3–23 (WMVWVFLLKPVIVFSIAYILF), 34–54 (MNNFDLLLTFAIGTIISEPIL), and 58–78 (LPMSIYYAGAFLVLYLIMSKL).

This sequence belongs to the UPF0702 family.

The protein localises to the cell membrane. The sequence is that of UPF0702 transmembrane protein YkjA (ykjA) from Bacillus subtilis (strain 168).